The primary structure comprises 489 residues: Glutamyl-tRNA(Gln) amidotransferase subunit A (489 aa).

Residues Lys75 and Ser150 each act as charge relay system in the active site. Ser174 functions as the Acyl-ester intermediate in the catalytic mechanism.

This sequence belongs to the amidase family. GatA subfamily. As to quaternary structure, heterotrimer of A, B and C subunits.

It carries out the reaction L-glutamyl-tRNA(Gln) + L-glutamine + ATP + H2O = L-glutaminyl-tRNA(Gln) + L-glutamate + ADP + phosphate + H(+). In terms of biological role, allows the formation of correctly charged Gln-tRNA(Gln) through the transamidation of misacylated Glu-tRNA(Gln) in organisms which lack glutaminyl-tRNA synthetase. The reaction takes place in the presence of glutamine and ATP through an activated gamma-phospho-Glu-tRNA(Gln). In Gloeobacter violaceus (strain ATCC 29082 / PCC 7421), this protein is Glutamyl-tRNA(Gln) amidotransferase subunit A.